We begin with the raw amino-acid sequence, 398 residues long: Phosphoglycerate kinase (398 aa).

Substrate-binding positions include 23 to 25 (DFN), Arg38, 61 to 64 (HMGK), Arg122, and Arg155. ATP-binding positions include Lys206, Gly297, Glu328, and 354–357 (GGDS).

This sequence belongs to the phosphoglycerate kinase family. As to quaternary structure, monomer.

Its subcellular location is the cytoplasm. It catalyses the reaction (2R)-3-phosphoglycerate + ATP = (2R)-3-phospho-glyceroyl phosphate + ADP. It participates in carbohydrate degradation; glycolysis; pyruvate from D-glyceraldehyde 3-phosphate: step 2/5. The chain is Phosphoglycerate kinase from Clostridium botulinum (strain 657 / Type Ba4).